Reading from the N-terminus, the 226-residue chain is REKEELNVSSETVESLSSNEPDSSSEESITHINKEKSQKFKHEGQQQREVEHQDKISRFVQPQPVVYPYAEPVPYAVVPQNILVLAQPPIVPFLQPEIMEVSQAKETILPKRKVMPFLKSPIVPFSERQILNPTNGENLRLPVHLIQPFMHQVPQSLLQTLMLPSQPVLSPPQSKVAPFPQPVVPYPQRDTPVQAFLLYQDPQLGLTGEFDPATQPIVPVHNPVIV.

The interval 1-51 (REKEELNVSSETVESLSSNEPDSSSEESITHINKEKSQKFKHEGQQQREVE) is disordered. Ser9 bears the Phosphoserine mark. Thr12 is modified (phosphothreonine). Residues Ser15, Ser17, Ser18, and Ser25 each carry the phosphoserine modification. The span at 28 to 51 (SITHINKEKSQKFKHEGQQQREVE) shows a compositional bias: basic and acidic residues.

Belongs to the beta-casein family. In terms of processing, there are at least three different forms found in milk, with varying degrees of phosphorylation. These include form 5-P which is phosphorylated at three sites, this form is present in low amounts, form 6-P which is phosphorylated at six sites, and form 7-P which is phosphorylated at seven sites. In terms of tissue distribution, mammary gland specific. Secreted in milk.

The protein localises to the secreted. Important role in determination of the surface properties of the casein micelles. The sequence is that of Beta-casein from Equus asinus (Donkey).